Reading from the N-terminus, the 91-residue chain is Ixochymostatin (91 aa).

Positions 1–20 (MKTYVLQALLLTLAVAVVRA) are cleaved as a signal peptide. Intrachain disulfides connect Cys-34/Cys-70, Cys-43/Cys-66, Cys-48/Cys-62, Cys-53/Cys-90, and Cys-72/Cys-84. In terms of domain architecture, TIL spans 34 to 90 (CAEGETWKECVGSSCAELTCEHPEPSLGCTYDCNYGCYCAPDFFRNANKECVKKDKC).

The protein belongs to the serine protease inhibitor-like (TIL domain-containing) family. As to expression, salivary gland. Midgut.

The protein localises to the secreted. Functionally, tight-binding competitive inhibitor of chymotrypsin-like proteases; inhibits host chymase, cathepsin G (CTSG) and chymotrypsin. Inhibits chymase-mediated generation of vasoconstrictor peptides: angiotensin II and endothelin I. Reduces chymase-mediated vascular permeability and vascular endothelial-cadherin degradation. The chain is Ixochymostatin from Ixodes scapularis (Black-legged tick).